The following is a 217-amino-acid chain: Cytidylate kinase (217 aa).

An ATP-binding site is contributed by 10 to 18 (GPAGAGKST).

Belongs to the cytidylate kinase family. Type 1 subfamily.

It is found in the cytoplasm. It catalyses the reaction CMP + ATP = CDP + ADP. The enzyme catalyses dCMP + ATP = dCDP + ADP. This chain is Cytidylate kinase, found in Clostridium botulinum (strain Okra / Type B1).